The sequence spans 138 residues: Cysteine desulfuration protein SufE (138 aa).

Residue Cys51 is the Cysteine persulfide intermediate of the active site.

Belongs to the SufE family. Homodimer. Interacts with SufS.

The protein resides in the cytoplasm. It participates in cofactor biosynthesis; iron-sulfur cluster biosynthesis. Participates in cysteine desulfuration mediated by SufS. Cysteine desulfuration mobilizes sulfur from L-cysteine to yield L-alanine and constitutes an essential step in sulfur metabolism for biosynthesis of a variety of sulfur-containing biomolecules. Functions as a sulfur acceptor for SufS, by mediating the direct transfer of the sulfur atom from the S-sulfanylcysteine of SufS, an intermediate product of cysteine desulfuration process. This Escherichia coli O81 (strain ED1a) protein is Cysteine desulfuration protein SufE.